A 158-amino-acid polypeptide reads, in one-letter code: SsrA-binding protein (158 aa).

It belongs to the SmpB family.

The protein resides in the cytoplasm. Required for rescue of stalled ribosomes mediated by trans-translation. Binds to transfer-messenger RNA (tmRNA), required for stable association of tmRNA with ribosomes. tmRNA and SmpB together mimic tRNA shape, replacing the anticodon stem-loop with SmpB. tmRNA is encoded by the ssrA gene; the 2 termini fold to resemble tRNA(Ala) and it encodes a 'tag peptide', a short internal open reading frame. During trans-translation Ala-aminoacylated tmRNA acts like a tRNA, entering the A-site of stalled ribosomes, displacing the stalled mRNA. The ribosome then switches to translate the ORF on the tmRNA; the nascent peptide is terminated with the 'tag peptide' encoded by the tmRNA and targeted for degradation. The ribosome is freed to recommence translation, which seems to be the essential function of trans-translation. The sequence is that of SsrA-binding protein from Saccharopolyspora erythraea (strain ATCC 11635 / DSM 40517 / JCM 4748 / NBRC 13426 / NCIMB 8594 / NRRL 2338).